The chain runs to 58 residues: Sperm protamine P1 (58 aa).

The segment at Met1–Arg58 is disordered.

This sequence belongs to the protamine P1 family. Testis.

It localises to the nucleus. The protein resides in the chromosome. In terms of biological role, protamines substitute for histones in the chromatin of sperm during the haploid phase of spermatogenesis. They compact sperm DNA into a highly condensed, stable and inactive complex. In Monodelphis domestica (Gray short-tailed opossum), this protein is Sperm protamine P1 (PRM1).